A 98-amino-acid polypeptide reads, in one-letter code: N(2)-fixation sustaining protein CowN (98 aa).

The protein belongs to the CowN family.

In terms of biological role, is required to sustain N(2)-dependent growth in the presence of low levels of carbon monoxide (CO). Probably acts by protecting the N(2) fixation ability of the nitrogenase complex, which is inactivated in the presence of CO. This Trichlorobacter lovleyi (strain ATCC BAA-1151 / DSM 17278 / SZ) (Geobacter lovleyi) protein is N(2)-fixation sustaining protein CowN.